A 221-amino-acid chain; its full sequence is Protein LURP-one-related 17 (221 aa).

Residues 1–20 (MFPFLKQRSRSVHGEDAPSS) are disordered.

Belongs to the LOR family.

Functionally, might be related to the phospholipid scramblase and tubby-like superfamily of membrane tethered transcription factors. In Arabidopsis thaliana (Mouse-ear cress), this protein is Protein LURP-one-related 17.